The following is a 127-amino-acid chain: Large ribosomal subunit protein bL17 (127 aa).

Belongs to the bacterial ribosomal protein bL17 family. Part of the 50S ribosomal subunit. Contacts protein L32.

In Vibrio vulnificus (strain CMCP6), this protein is Large ribosomal subunit protein bL17.